The primary structure comprises 384 residues: 5-amino-6-(D-ribitylamino)uracil--L-tyrosine 4-hydroxyphenyl transferase 2 (384 aa).

Positions 53–286 constitute a Radical SAM core domain; sequence VSYVVNRNIY…IAISRVILHT (234 aa). Cysteine 67, cysteine 71, and cysteine 74 together coordinate [4Fe-4S] cluster.

It belongs to the radical SAM superfamily. CofH family. Consists of two subunits, CofG and CofH. Requires [4Fe-4S] cluster as cofactor.

It carries out the reaction 5-amino-6-(D-ribitylamino)uracil + L-tyrosine + S-adenosyl-L-methionine = 5-amino-5-(4-hydroxybenzyl)-6-(D-ribitylimino)-5,6-dihydrouracil + 2-iminoacetate + 5'-deoxyadenosine + L-methionine + H(+). The protein operates within cofactor biosynthesis; coenzyme F0 biosynthesis. Catalyzes the radical-mediated synthesis of 5-amino-5-(4-hydroxybenzyl)-6-(D-ribitylimino)-5,6-dihydrouracil from 5-amino-6-(D-ribitylamino)uracil and L-tyrosine. This Methanosarcina mazei (strain ATCC BAA-159 / DSM 3647 / Goe1 / Go1 / JCM 11833 / OCM 88) (Methanosarcina frisia) protein is 5-amino-6-(D-ribitylamino)uracil--L-tyrosine 4-hydroxyphenyl transferase 2.